A 355-amino-acid polypeptide reads, in one-letter code: UDP-N-acetylglucosamine--N-acetylmuramyl-(pentapeptide) pyrophosphoryl-undecaprenol N-acetylglucosamine transferase (355 aa).

UDP-N-acetyl-alpha-D-glucosamine contacts are provided by residues 15–17 (TGG), N127, R163, S191, I244, 263–268 (ALTVSE), and Q288.

Belongs to the glycosyltransferase 28 family. MurG subfamily.

The protein resides in the cell inner membrane. The catalysed reaction is di-trans,octa-cis-undecaprenyl diphospho-N-acetyl-alpha-D-muramoyl-L-alanyl-D-glutamyl-meso-2,6-diaminopimeloyl-D-alanyl-D-alanine + UDP-N-acetyl-alpha-D-glucosamine = di-trans,octa-cis-undecaprenyl diphospho-[N-acetyl-alpha-D-glucosaminyl-(1-&gt;4)]-N-acetyl-alpha-D-muramoyl-L-alanyl-D-glutamyl-meso-2,6-diaminopimeloyl-D-alanyl-D-alanine + UDP + H(+). It functions in the pathway cell wall biogenesis; peptidoglycan biosynthesis. Cell wall formation. Catalyzes the transfer of a GlcNAc subunit on undecaprenyl-pyrophosphoryl-MurNAc-pentapeptide (lipid intermediate I) to form undecaprenyl-pyrophosphoryl-MurNAc-(pentapeptide)GlcNAc (lipid intermediate II). This chain is UDP-N-acetylglucosamine--N-acetylmuramyl-(pentapeptide) pyrophosphoryl-undecaprenol N-acetylglucosamine transferase, found in Escherichia coli (strain K12 / MC4100 / BW2952).